Reading from the N-terminus, the 297-residue chain is Glycerol-3-phosphate dehydrogenase [NAD(P)+] (297 aa).

Residues W11, R33, and K79 each contribute to the NADPH site. Residues K79, G107, and S109 each contribute to the sn-glycerol 3-phosphate site. A111 provides a ligand contact to NADPH. Sn-glycerol 3-phosphate-binding residues include K161, D214, S224, R225, and N226. K161 acts as the Proton acceptor in catalysis. Position 225 (R225) interacts with NADPH. NADPH contacts are provided by V249 and E251.

It belongs to the NAD-dependent glycerol-3-phosphate dehydrogenase family.

The protein resides in the cytoplasm. The catalysed reaction is sn-glycerol 3-phosphate + NAD(+) = dihydroxyacetone phosphate + NADH + H(+). It catalyses the reaction sn-glycerol 3-phosphate + NADP(+) = dihydroxyacetone phosphate + NADPH + H(+). It functions in the pathway membrane lipid metabolism; glycerophospholipid metabolism. Functionally, catalyzes the reduction of the glycolytic intermediate dihydroxyacetone phosphate (DHAP) to sn-glycerol 3-phosphate (G3P), the key precursor for phospholipid synthesis. This is Glycerol-3-phosphate dehydrogenase [NAD(P)+] from Campylobacter jejuni subsp. jejuni serotype O:6 (strain 81116 / NCTC 11828).